A 485-amino-acid polypeptide reads, in one-letter code: Glutamyl-tRNA(Gln) amidotransferase subunit A (485 aa).

Residues K79 and S154 each act as charge relay system in the active site. The active-site Acyl-ester intermediate is S178.

This sequence belongs to the amidase family. GatA subfamily. As to quaternary structure, heterotrimer of A, B and C subunits.

It carries out the reaction L-glutamyl-tRNA(Gln) + L-glutamine + ATP + H2O = L-glutaminyl-tRNA(Gln) + L-glutamate + ADP + phosphate + H(+). In terms of biological role, allows the formation of correctly charged Gln-tRNA(Gln) through the transamidation of misacylated Glu-tRNA(Gln) in organisms which lack glutaminyl-tRNA synthetase. The reaction takes place in the presence of glutamine and ATP through an activated gamma-phospho-Glu-tRNA(Gln). This is Glutamyl-tRNA(Gln) amidotransferase subunit A from Staphylococcus aureus (strain USA300 / TCH1516).